The primary structure comprises 207 residues: Large ribosomal subunit protein uL4 (207 aa).

The tract at residues 59–78 is disordered; sequence GSGKKPFKQKGTGQARQGCK.

The protein belongs to the universal ribosomal protein uL4 family. As to quaternary structure, part of the 50S ribosomal subunit.

Its function is as follows. One of the primary rRNA binding proteins, this protein initially binds near the 5'-end of the 23S rRNA. It is important during the early stages of 50S assembly. It makes multiple contacts with different domains of the 23S rRNA in the assembled 50S subunit and ribosome. Forms part of the polypeptide exit tunnel. The sequence is that of Large ribosomal subunit protein uL4 from Geotalea daltonii (strain DSM 22248 / JCM 15807 / FRC-32) (Geobacter daltonii).